We begin with the raw amino-acid sequence, 459 residues long: Bifunctional protein GlmU (459 aa).

A pyrophosphorylase region spans residues Met-1 to Arg-229. Residues Leu-8–Gly-11, Lys-22, Gln-72, and Gly-77–Thr-78 each bind UDP-N-acetyl-alpha-D-glucosamine. Asp-102 contacts Mg(2+). Residues Gly-139, Glu-154, Asn-169, and Asn-227 each coordinate UDP-N-acetyl-alpha-D-glucosamine. Asn-227 contacts Mg(2+). Residues Val-230–Asn-250 are linker. The interval Gly-251–Lys-459 is N-acetyltransferase. Residues Arg-332 and Lys-350 each contribute to the UDP-N-acetyl-alpha-D-glucosamine site. Catalysis depends on His-362, which acts as the Proton acceptor. Positions 365 and 376 each coordinate UDP-N-acetyl-alpha-D-glucosamine. Acetyl-CoA contacts are provided by residues Ala-379, Asn-385–Tyr-386, Ser-404, Ala-422, and Arg-439.

This sequence in the N-terminal section; belongs to the N-acetylglucosamine-1-phosphate uridyltransferase family. In the C-terminal section; belongs to the transferase hexapeptide repeat family. As to quaternary structure, homotrimer. Mg(2+) is required as a cofactor.

It is found in the cytoplasm. The enzyme catalyses alpha-D-glucosamine 1-phosphate + acetyl-CoA = N-acetyl-alpha-D-glucosamine 1-phosphate + CoA + H(+). It carries out the reaction N-acetyl-alpha-D-glucosamine 1-phosphate + UTP + H(+) = UDP-N-acetyl-alpha-D-glucosamine + diphosphate. It participates in nucleotide-sugar biosynthesis; UDP-N-acetyl-alpha-D-glucosamine biosynthesis; N-acetyl-alpha-D-glucosamine 1-phosphate from alpha-D-glucosamine 6-phosphate (route II): step 2/2. It functions in the pathway nucleotide-sugar biosynthesis; UDP-N-acetyl-alpha-D-glucosamine biosynthesis; UDP-N-acetyl-alpha-D-glucosamine from N-acetyl-alpha-D-glucosamine 1-phosphate: step 1/1. Its pathway is bacterial outer membrane biogenesis; LPS lipid A biosynthesis. Its function is as follows. Catalyzes the last two sequential reactions in the de novo biosynthetic pathway for UDP-N-acetylglucosamine (UDP-GlcNAc). The C-terminal domain catalyzes the transfer of acetyl group from acetyl coenzyme A to glucosamine-1-phosphate (GlcN-1-P) to produce N-acetylglucosamine-1-phosphate (GlcNAc-1-P), which is converted into UDP-GlcNAc by the transfer of uridine 5-monophosphate (from uridine 5-triphosphate), a reaction catalyzed by the N-terminal domain. The sequence is that of Bifunctional protein GlmU from Streptococcus mutans serotype c (strain ATCC 700610 / UA159).